The chain runs to 99 residues: RNA-binding protein Hfq (99 aa).

A Sm domain is found at 9–68 (DPYLNALRRERIPVSIYLVNGIKLQGQIESFDQFVILLKNTVNQMVYKHAISTVVPARSV). Residues 67–99 (SVSHHNNNAQQQYQQQAAQAASAQSNETSSQAE) are disordered. Residues 72–99 (NNNAQQQYQQQAAQAASAQSNETSSQAE) show a composition bias toward low complexity.

It belongs to the Hfq family. In terms of assembly, homohexamer.

Functionally, RNA chaperone that binds small regulatory RNA (sRNAs) and mRNAs to facilitate mRNA translational regulation in response to envelope stress, environmental stress and changes in metabolite concentrations. Also binds with high specificity to tRNAs. The polypeptide is RNA-binding protein Hfq (Actinobacillus succinogenes (strain ATCC 55618 / DSM 22257 / CCUG 43843 / 130Z)).